The primary structure comprises 278 residues: Probable malate dehydrogenase (278 aa).

Substrate-binding residues include R51 and R57. NAD(+) contacts are provided by residues N64 and 87-89 (VSN). Residues N89 and R120 each coordinate substrate. The active-site Proton acceptor is the H144.

Belongs to the LDH/MDH superfamily.

It catalyses the reaction (S)-malate + NAD(+) = oxaloacetate + NADH + H(+). In terms of biological role, catalyzes the reversible oxidation of malate to oxaloacetate. This is Probable malate dehydrogenase (mdh) from Pseudomonas putida (strain ATCC 47054 / DSM 6125 / CFBP 8728 / NCIMB 11950 / KT2440).